Reading from the N-terminus, the 324-residue chain is MGNLLKVLTCTDLEQGPNFFLDFENAQPTESEKEIYNQVNVVLKDAEGILEDLQSYRGAGHEIREAIQHPADEKLQEKAWGAVVPLVGKLKKFYEFSQRLEAALRGLLGALTSTPYSPTQHLEREQALAKQFAEILHFTLRFDELKMTNPAIQNDFSYYRRTLSRMRINNVPAEGENEVNNELANRMSLFYAEATPMLKTLSDATTKFVSENKNLPIENTTDCLSTMASVCRVMLETPEYRSRFTNEETVSFCLRVMVGVIILYDHVHPVGAFAKTSKIDMKGCIKVLKDQPPNSVEGLLNALRYTTKHLNDETTSKQIRSMLQ.

Residue Gly2 is the site of N-myristoyl glycine attachment. Lys74 is covalently cross-linked (Glycyl lysine isopeptide (Lys-Gly) (interchain with G-Cter in ubiquitin)).

Belongs to the CYRI family. As to quaternary structure, interacts with RAC1 (GTP-bound form preferentially). In terms of processing, ubiquitinated at Lys-74 upon Salmonella bacterial infection. Expressed in pancreatic ducts (at protein level).

Its subcellular location is the membrane. It is found in the mitochondrion. Functionally, negatively regulates RAC1 signaling and RAC1-driven cytoskeletal remodeling. Regulates chemotaxis, cell migration and epithelial polarization by controlling the polarity, plasticity, duration and extent of protrusions. Limits Rac1 mediated activation of the Scar/WAVE complex, focuses protrusion signals and regulates pseudopod complexity by inhibiting Scar/WAVE-induced actin polymerization. Protects against Salmonella bacterial infection. Attenuates processes such as macropinocytosis, phagocytosis and cell migration and restrict sopE-mediated bacterial entry. Also restricts infection mediated by Mycobacterium tuberculosis and Listeria monocytogenes. Involved in the regulation of mitochondrial dynamics and oxidative stress. The protein is CYFIP-related Rac1 interactor B (Cyrib) of Mus musculus (Mouse).